The following is a 179-amino-acid chain: Large ribosomal subunit protein uL5 (179 aa).

Belongs to the universal ribosomal protein uL5 family. As to quaternary structure, part of the 50S ribosomal subunit; part of the 5S rRNA/L5/L18/L25 subcomplex. Contacts the 5S rRNA and the P site tRNA. Forms a bridge to the 30S subunit in the 70S ribosome.

Its function is as follows. This is one of the proteins that bind and probably mediate the attachment of the 5S RNA into the large ribosomal subunit, where it forms part of the central protuberance. In the 70S ribosome it contacts protein S13 of the 30S subunit (bridge B1b), connecting the 2 subunits; this bridge is implicated in subunit movement. Contacts the P site tRNA; the 5S rRNA and some of its associated proteins might help stabilize positioning of ribosome-bound tRNAs. The chain is Large ribosomal subunit protein uL5 from Paraburkholderia phymatum (strain DSM 17167 / CIP 108236 / LMG 21445 / STM815) (Burkholderia phymatum).